A 430-amino-acid chain; its full sequence is Trigger factor (430 aa).

Residues 157–242 form the PPIase FKBP-type domain; the sequence is GDLVALETWS…AVEVSEPVLP (86 aa).

Belongs to the FKBP-type PPIase family. Tig subfamily.

The protein localises to the cytoplasm. It catalyses the reaction [protein]-peptidylproline (omega=180) = [protein]-peptidylproline (omega=0). Involved in protein export. Acts as a chaperone by maintaining the newly synthesized protein in an open conformation. Functions as a peptidyl-prolyl cis-trans isomerase. The sequence is that of Trigger factor from Xanthomonas oryzae pv. oryzae (strain PXO99A).